Here is a 192-residue protein sequence, read N- to C-terminus: Thymidine kinase (192 aa).

Residues 9–16 and 87–90 each bind ATP; these read SAMNAGKS and DECQ. Glutamate 88 acts as the Proton acceptor in catalysis. Zn(2+) contacts are provided by cysteine 145, cysteine 147, cysteine 182, and histidine 185.

Belongs to the thymidine kinase family. In terms of assembly, homotetramer.

The protein localises to the cytoplasm. The catalysed reaction is thymidine + ATP = dTMP + ADP + H(+). The sequence is that of Thymidine kinase from Vibrio parahaemolyticus serotype O3:K6 (strain RIMD 2210633).